The chain runs to 99 residues: Aspartyl/glutamyl-tRNA(Asn/Gln) amidotransferase subunit C (99 aa).

It belongs to the GatC family. As to quaternary structure, heterotrimer of A, B and C subunits.

The catalysed reaction is L-glutamyl-tRNA(Gln) + L-glutamine + ATP + H2O = L-glutaminyl-tRNA(Gln) + L-glutamate + ADP + phosphate + H(+). It catalyses the reaction L-aspartyl-tRNA(Asn) + L-glutamine + ATP + H2O = L-asparaginyl-tRNA(Asn) + L-glutamate + ADP + phosphate + 2 H(+). Its function is as follows. Allows the formation of correctly charged Asn-tRNA(Asn) or Gln-tRNA(Gln) through the transamidation of misacylated Asp-tRNA(Asn) or Glu-tRNA(Gln) in organisms which lack either or both of asparaginyl-tRNA or glutaminyl-tRNA synthetases. The reaction takes place in the presence of glutamine and ATP through an activated phospho-Asp-tRNA(Asn) or phospho-Glu-tRNA(Gln). The chain is Aspartyl/glutamyl-tRNA(Asn/Gln) amidotransferase subunit C from Albidiferax ferrireducens (strain ATCC BAA-621 / DSM 15236 / T118) (Rhodoferax ferrireducens).